Consider the following 189-residue polypeptide: MKRLIVGISGASGAIYGVRLLQILRDVDSVETHLVMSQAARQTLALETHFSLREVQALADVTHDARDIAASISSGSYPTAGMVILPCSIKTLSGIVHSYTDGLLTRAADVILKERRPLVLCVRETPLHIGHLRLMTQAAEIGAVIMPPVPAFYHLPQTLDDVINQTVNRVLDQFDIPLPHDLFVRWQGA.

Residues 10-12, Ser-37, 88-91, and Arg-123 each bind FMN; these read GAS and SIKT. 2 residues coordinate dimethylallyl phosphate: Tyr-153 and Arg-169.

It belongs to the UbiX/PAD1 family.

The enzyme catalyses dimethylallyl phosphate + FMNH2 = prenylated FMNH2 + phosphate. It participates in cofactor biosynthesis; ubiquinone biosynthesis. Its function is as follows. Flavin prenyltransferase that catalyzes the synthesis of the prenylated FMN cofactor (prenyl-FMN) for 4-hydroxy-3-polyprenylbenzoic acid decarboxylase UbiD. The prenyltransferase is metal-independent and links a dimethylallyl moiety from dimethylallyl monophosphate (DMAP) to the flavin N5 and C6 atoms of FMN. This chain is Flavin prenyltransferase UbiX, found in Salmonella typhi.